We begin with the raw amino-acid sequence, 372 residues long: Segmentation polarity homeobox protein engrailed (372 aa).

Disordered regions lie at residues 1 to 35, 47 to 112, 196 to 246, and 261 to 286; these read MAFE…YSPQ, YERG…LQPT, ERLS…QSNP, and DRPS…PRTA. 2 stretches are compositionally biased toward basic and acidic residues: residues 79 to 105 and 197 to 215; these read DYYR…DRSR and RLSR…KRPD. The span at 216-244 shows a compositional bias: low complexity; the sequence is SASSIVSSTSSGAVSTCGSSDASSIQSQS. The homeobox DNA-binding region spans 280-339; sequence EKRPRTAFSGAQLARLKHEFAENRYLTERRRQSLAAELGLAEAQIKIWFQNKRAKIKKAS.

Belongs to the engrailed homeobox family. As to expression, expressed in the middle silk gland but not in the posterior silk gland during the fourth molt/fifth intermolt period.

It is found in the nucleus. This protein might be involved in the compartmentalization of the silk gland. This chain is Segmentation polarity homeobox protein engrailed (en), found in Bombyx mori (Silk moth).